The following is a 195-amino-acid chain: Imidazoleglycerol-phosphate dehydratase (195 aa).

This sequence belongs to the imidazoleglycerol-phosphate dehydratase family.

The protein resides in the cytoplasm. The catalysed reaction is D-erythro-1-(imidazol-4-yl)glycerol 3-phosphate = 3-(imidazol-4-yl)-2-oxopropyl phosphate + H2O. It functions in the pathway amino-acid biosynthesis; L-histidine biosynthesis; L-histidine from 5-phospho-alpha-D-ribose 1-diphosphate: step 6/9. In Exiguobacterium sp. (strain ATCC BAA-1283 / AT1b), this protein is Imidazoleglycerol-phosphate dehydratase.